The following is an 818-amino-acid chain: Mediator of RNA polymerase II transcription subunit 16 (818 aa).

WD repeat units lie at residues 86 to 125, 296 to 342, and 615 to 666; these read SSKS…INLW, LDGR…QSVH, and RLPE…PVYT. Residues 175–524 form an interaction with Dif region; the sequence is TLSGFGGVAS…ANFLALKSNI (350 aa).

It belongs to the Mediator complex subunit 16 family. As to quaternary structure, component of the Mediator complex. Interacts with Dif.

Its subcellular location is the nucleus. Its function is as follows. Component of the Mediator complex, a coactivator involved in the regulated transcription of nearly all RNA polymerase II-dependent genes. Mediator functions as a bridge to convey information from gene-specific regulatory proteins to the basal RNA polymerase II transcription machinery. Mediator is recruited to promoters by direct interactions with regulatory proteins and serves as a scaffold for the assembly of a functional preinitiation complex with RNA polymerase II and the general transcription factors. Required for activated transcription of the MtnA, MtnB and MtnD genes. Required for transcriptional activation in response to lipopolysacchardie (LPS). The protein is Mediator of RNA polymerase II transcription subunit 16 (MED16) of Drosophila melanogaster (Fruit fly).